The sequence spans 89 residues: Large ribosomal subunit protein bL27 (89 aa).

The disordered stretch occupies residues 1–21; sequence MAHKKAGGSSRNGRDSKGKRL.

Belongs to the bacterial ribosomal protein bL27 family.

The chain is Large ribosomal subunit protein bL27 from Bradyrhizobium sp. (strain ORS 278).